Here is a 119-residue protein sequence, read N- to C-terminus: Large ribosomal subunit protein uL24 (119 aa).

Belongs to the universal ribosomal protein uL24 family. In terms of assembly, part of the 50S ribosomal subunit.

In terms of biological role, one of two assembly initiator proteins, it binds directly to the 5'-end of the 23S rRNA, where it nucleates assembly of the 50S subunit. Functionally, located at the polypeptide exit tunnel on the outside of the subunit. The protein is Large ribosomal subunit protein uL24 of Methanococcus vannielii.